Consider the following 307-residue polypeptide: Putative lipid kinase SE_0507 (307 aa).

One can recognise a DAGKc domain in the interval 3–139 (QPYNHGVLFY…YDVLKVNDLY (137 aa)). ATP-binding positions include Ser-44, 74 to 80 (GDGTLNE), and Thr-101. Mg(2+)-binding residues include Ser-220, Asp-223, and Arg-225. The active-site Proton acceptor is Glu-281.

The protein belongs to the diacylglycerol/lipid kinase family. The cofactor is Mg(2+).

May catalyze the ATP-dependent phosphorylation of lipids other than diacylglycerol (DAG). The protein is Putative lipid kinase SE_0507 of Staphylococcus epidermidis (strain ATCC 12228 / FDA PCI 1200).